A 238-amino-acid polypeptide reads, in one-letter code: N-(5'-phosphoribosyl)anthranilate isomerase (238 aa).

It belongs to the TrpF family.

The catalysed reaction is N-(5-phospho-beta-D-ribosyl)anthranilate = 1-(2-carboxyphenylamino)-1-deoxy-D-ribulose 5-phosphate. It participates in amino-acid biosynthesis; L-tryptophan biosynthesis; L-tryptophan from chorismate: step 3/5. This is N-(5'-phosphoribosyl)anthranilate isomerase from Methanosarcina acetivorans (strain ATCC 35395 / DSM 2834 / JCM 12185 / C2A).